Here is a 134-residue protein sequence, read N- to C-terminus: MSWQTYVDDHLMCDIEGHEGHRLTAAAIVGHDGSVWAQSATFPQFKPEEMNGIMTDSNEPGHLAPTGLHLGGTKYMVIQGEAGAVIRGKKGSGGITIKKTGQALVCGIYEEPVTPGQCNMVVERLGDYLLEQGL.

A disulfide bridge links C13 with C118. The Involved in PIP2 interaction motif lies at A84–T100. At T114 the chain carries Phosphothreonine.

Belongs to the profilin family. Occurs in many kinds of cells as a complex with monomeric actin in a 1:1 ratio. Phosphorylated by MAP kinases.

It localises to the cytoplasm. Its subcellular location is the cytoskeleton. Functionally, binds to actin and affects the structure of the cytoskeleton. At high concentrations, profilin prevents the polymerization of actin, whereas it enhances it at low concentrations. The polypeptide is Profilin-3 (Olea europaea (Common olive)).